We begin with the raw amino-acid sequence, 307 residues long: Fructokinase (307 aa).

The protein belongs to the carbohydrate kinase PfkB family.

It carries out the reaction D-fructose + ATP = D-fructose 6-phosphate + ADP + H(+). The chain is Fructokinase (scrK) from Vibrio alginolyticus.